The sequence spans 154 residues: UPF0178 protein YaiI (154 aa).

It belongs to the UPF0178 family.

The sequence is that of UPF0178 protein YaiI from Escherichia fergusonii (strain ATCC 35469 / DSM 13698 / CCUG 18766 / IAM 14443 / JCM 21226 / LMG 7866 / NBRC 102419 / NCTC 12128 / CDC 0568-73).